The chain runs to 213 residues: Protein FAM177A1 (213 aa).

At Met-1 the chain carries N-acetylmethionine. Ser-70 is subject to Phosphoserine. Thr-71 is modified (phosphothreonine). The stretch at 136 to 173 forms a coiled coil; sequence IDEYYRMKKEEEEEEEENRMSEEAEKQYQQNKLQTDSI. The disordered stretch occupies residues 147-175; it reads EEEEEENRMSEEAEKQYQQNKLQTDSIVQ. Residues 162-175 are compositionally biased toward polar residues; that stretch reads QYQQNKLQTDSIVQ.

This sequence belongs to the FAM177 family.

This Homo sapiens (Human) protein is Protein FAM177A1 (FAM177A1).